Here is a 159-residue protein sequence, read N- to C-terminus: Major latex protein 149 (159 aa).

This sequence belongs to the MLP family. As to expression, laticifer.

It is found in the vacuole. The protein localises to the cytoplasmic vesicle. Its function is as follows. Not known; MLPs constitute up to 50% of the soluble latex protein. The protein is Major latex protein 149 (MLP149) of Papaver somniferum (Opium poppy).